A 101-amino-acid chain; its full sequence is Protein SPIRAL1-like 3 (101 aa).

The segment covering 1-22 has biased composition (gly residues); the sequence is MGRGVSSGGGQSSLGYLFGGGE. 2 disordered regions span residues 1 to 54 and 73 to 101; these read MGRG…GIQS and TDRPSTKVQAAPGGGSSLDYLFSGNKDGK.

This sequence belongs to the SPIRAL1 family.

In terms of biological role, acts in maintaining the cortical microtubules organization essential for anisotropic cell growth. The polypeptide is Protein SPIRAL1-like 3 (Oryza sativa subsp. japonica (Rice)).